A 359-amino-acid polypeptide reads, in one-letter code: 4-hydroxy-3-methylbut-2-en-1-yl diphosphate synthase (flavodoxin) (359 aa).

Positions 264, 267, 299, and 306 each coordinate [4Fe-4S] cluster.

It belongs to the IspG family. It depends on [4Fe-4S] cluster as a cofactor.

It carries out the reaction (2E)-4-hydroxy-3-methylbut-2-enyl diphosphate + oxidized [flavodoxin] + H2O + 2 H(+) = 2-C-methyl-D-erythritol 2,4-cyclic diphosphate + reduced [flavodoxin]. Its pathway is isoprenoid biosynthesis; isopentenyl diphosphate biosynthesis via DXP pathway; isopentenyl diphosphate from 1-deoxy-D-xylulose 5-phosphate: step 5/6. Functionally, converts 2C-methyl-D-erythritol 2,4-cyclodiphosphate (ME-2,4cPP) into 1-hydroxy-2-methyl-2-(E)-butenyl 4-diphosphate. The polypeptide is 4-hydroxy-3-methylbut-2-en-1-yl diphosphate synthase (flavodoxin) (Helicobacter pylori (strain G27)).